A 175-amino-acid chain; its full sequence is Shikimate kinase (175 aa).

Position 14 to 19 (14 to 19) interacts with ATP; it reads GAGKST. Position 18 (Ser18) interacts with Mg(2+). Substrate is bound by residues Asp36, Arg60, and Gly82. An ATP-binding site is contributed by Arg120. Arg140 contacts substrate. Gln157 contacts ATP.

Belongs to the shikimate kinase family. In terms of assembly, monomer. Mg(2+) serves as cofactor.

The protein localises to the cytoplasm. It carries out the reaction shikimate + ATP = 3-phosphoshikimate + ADP + H(+). It functions in the pathway metabolic intermediate biosynthesis; chorismate biosynthesis; chorismate from D-erythrose 4-phosphate and phosphoenolpyruvate: step 5/7. In terms of biological role, catalyzes the specific phosphorylation of the 3-hydroxyl group of shikimic acid using ATP as a cosubstrate. The polypeptide is Shikimate kinase (Pasteurella multocida (strain Pm70)).